We begin with the raw amino-acid sequence, 426 residues long: Glutamate-1-semialdehyde 2,1-aminomutase (426 aa).

N6-(pyridoxal phosphate)lysine is present on Lys265.

This sequence belongs to the class-III pyridoxal-phosphate-dependent aminotransferase family. HemL subfamily. In terms of assembly, homodimer. Requires pyridoxal 5'-phosphate as cofactor.

It is found in the cytoplasm. It carries out the reaction (S)-4-amino-5-oxopentanoate = 5-aminolevulinate. It functions in the pathway porphyrin-containing compound metabolism; protoporphyrin-IX biosynthesis; 5-aminolevulinate from L-glutamyl-tRNA(Glu): step 2/2. This chain is Glutamate-1-semialdehyde 2,1-aminomutase, found in Neisseria gonorrhoeae (strain ATCC 700825 / FA 1090).